Reading from the N-terminus, the 88-residue chain is Small ribosomal subunit protein uS17 (88 aa).

Belongs to the universal ribosomal protein uS17 family. In terms of assembly, part of the 30S ribosomal subunit.

Functionally, one of the primary rRNA binding proteins, it binds specifically to the 5'-end of 16S ribosomal RNA. The chain is Small ribosomal subunit protein uS17 from Xylella fastidiosa (strain M23).